The chain runs to 473 residues: Mediator of RNA polymerase II transcription subunit 29 (473 aa).

Residues 1–12 (MSGQGPPSNLTP) show a composition bias toward polar residues. Disordered regions lie at residues 1 to 319 (MSGQ…NEEQ) and 444 to 473 (STME…EMAE). The span at 13–50 (QQQHMIMQQQQQQQMMRQQQIQQQQLHQRQLQQQQAQQ) shows a compositional bias: low complexity. Polar residues predominate over residues 51–62 (SYQRSRTPQMQQ). Low complexity-rich tracts occupy residues 111 to 123 (QMMQ…NQPM) and 130 to 139 (VSRPGSVAPP). 2 stretches are compositionally biased toward polar residues: residues 148–183 (TGPS…QQSH) and 255–269 (PPGS…QPGS). Low complexity-rich tracts occupy residues 272–286 (APGS…QPPA) and 294–308 (AASG…AAPA).

It belongs to the Mediator complex subunit 29 family. As to quaternary structure, component of the Mediator complex.

It localises to the nucleus. Component of the Mediator complex, a coactivator involved in the regulated transcription of nearly all RNA polymerase II-dependent genes. Mediator functions as a bridge to convey information from gene-specific regulatory proteins to the basal RNA polymerase II transcription machinery. Mediator is recruited to promoters by direct interactions with regulatory proteins and serves as a scaffold for the assembly of a functional preinitiation complex with RNA polymerase II and the general transcription factors. The chain is Mediator of RNA polymerase II transcription subunit 29 (mdt-29) from Caenorhabditis briggsae.